A 123-amino-acid polypeptide reads, in one-letter code: Defensin beta 118 (123 aa).

The signal sequence occupies residues 1–19 (MKLLLLALPMLVLLPQVIP). 3 disulfides stabilise this stretch: Cys27/Cys54, Cys34/Cys48, and Cys38/Cys55. A propeptide spanning residues 65 to 123 (VPTTSPTPLSDSTPGIIDDILTVRFTTDYFEVSSKKDMIEESEAGRGTETSLPNVHHSS) is cleaved from the precursor. Basic and acidic residues predominate over residues 100 to 110 (KDMIEESEAGR). A disordered region spans residues 100-123 (KDMIEESEAGRGTETSLPNVHHSS). A compositionally biased stretch (polar residues) spans 112 to 123 (TETSLPNVHHSS).

It belongs to the beta-defensin family. The three-dimensional structure formed by the three intramolecular disulfide bridges is indispensable for antimicrobial activity.

Its subcellular location is the secreted. In terms of biological role, host defense peptide that exhibits antimicrobial activity against both Gram-negative bacteria, such as E.coli and S.typhimurium, and Gram-positive bacteria, such as S.aureus and B.subtilis. Inhibits cell adhesion of E.coli on intestinal epithelial enterocytes. Causes rapid permeabilization of both the outer and inner membrane of E.coli, leading to morphological alterations on the bacterial surface. Binds to bacterial lipopolysaccharides (LPS) with high affinity, and may thereby be involved in immunoregulation through LPS neutralization. May contribute to epididymal innate immunity and protect the sperm against attack by microorganisms. This Gorilla gorilla gorilla (Western lowland gorilla) protein is Defensin beta 118 (DEFB118).